We begin with the raw amino-acid sequence, 748 residues long: MFNEITKSVTWNGQVLELSTGKIARQADGAVTVKMGNSVLLCTAVVANKAKEGIGFLPLTINYREMAYAAGKIPGGFFKHEGKASDREVLVSRLIDRPIRPLFHPAFVNETHVTCSVLSYDPETPVDILAIIGASAALSLSPAPYLEIVAASKVGLINGEFVLNPTLALLKTSQLDLVVAGTSDSVMMVESEAHLLSEEQMLEAVKFGFESFQPVIKIIKELAEEAKKPKLEMQALYPASLKKEIEKLFVKEIEQAFAIKSKQERSTNLDLIPEKVLTHFVSDIENKKYSNYQIESALKAIESDILRNEILEKNRRIDGRSTTDIRQIACEIGLLPSAHGSALFTRGETQSLVSTTFGTSLDEQIVDSLEGEYKERFMLNYIFPPYSVNEAMPMKAPSRREVGHGKLAWRAINPILPNKVQFPYSIRVVAETTESNGSSSMATVCGSSLALMYAGVPIKAPVAGIAMGLVKEGKNFAVLSDILGDEDYFGDMDFKVAGTSEGITALQMDIKISGVDFKIMKVALEQARLGRLHILEQMNKVISKPNNELSKNAPSTTTIKIDKDKIRDIIGPGGKVIKEICETSGAKIDISDDGTVSVYASDRDKLKVALDKIKAIVVEPEIGEIFNGTVVKVLDSGAFINYVGNKDGFVHISEVSGERIETVSSVLKQGDIVKVKLIGFDNKGKAKLTIKNADKDKSSNNTKPKTNVNNTKDNSEPEQRRDSSKKRAWNEDNNAETAEVITERKYFN.

Mg(2+)-binding residues include Asp-487 and Asp-493. In terms of domain architecture, KH spans 554–613; the sequence is PSTTTIKIDKDKIRDIIGPGGKVIKEICETSGAKIDISDDGTVSVYASDRDKLKVALDKI. The S1 motif domain maps to 623-691; sequence GEIFNGTVVK…NKGKAKLTIK (69 aa). A disordered region spans residues 691 to 748; it reads KNADKDKSSNNTKPKTNVNNTKDNSEPEQRRDSSKKRAWNEDNNAETAEVITERKYFN. A compositionally biased stretch (low complexity) spans 699–712; the sequence is SNNTKPKTNVNNTK. Positions 713-722 are enriched in basic and acidic residues; the sequence is DNSEPEQRRD.

The protein belongs to the polyribonucleotide nucleotidyltransferase family. The cofactor is Mg(2+).

The protein resides in the cytoplasm. It catalyses the reaction RNA(n+1) + phosphate = RNA(n) + a ribonucleoside 5'-diphosphate. Involved in mRNA degradation. Catalyzes the phosphorolysis of single-stranded polyribonucleotides processively in the 3'- to 5'-direction. The polypeptide is Polyribonucleotide nucleotidyltransferase (Rickettsia africae (strain ESF-5)).